A 203-amino-acid chain; its full sequence is ATP-dependent Clp protease proteolytic subunit 1 (203 aa).

Ser102 serves as the catalytic Nucleophile. His127 is a catalytic residue.

This sequence belongs to the peptidase S14 family. Fourteen ClpP subunits assemble into 2 heptameric rings which stack back to back to give a disk-like structure with a central cavity, resembling the structure of eukaryotic proteasomes.

Its subcellular location is the cytoplasm. It catalyses the reaction Hydrolysis of proteins to small peptides in the presence of ATP and magnesium. alpha-casein is the usual test substrate. In the absence of ATP, only oligopeptides shorter than five residues are hydrolyzed (such as succinyl-Leu-Tyr-|-NHMec, and Leu-Tyr-Leu-|-Tyr-Trp, in which cleavage of the -Tyr-|-Leu- and -Tyr-|-Trp bonds also occurs).. Functionally, cleaves peptides in various proteins in a process that requires ATP hydrolysis. Has a chymotrypsin-like activity. Plays a major role in the degradation of misfolded proteins. The sequence is that of ATP-dependent Clp protease proteolytic subunit 1 from Rhizobium johnstonii (strain DSM 114642 / LMG 32736 / 3841) (Rhizobium leguminosarum bv. viciae).